A 164-amino-acid polypeptide reads, in one-letter code: Transcription antitermination protein NusB (164 aa).

The protein belongs to the NusB family.

In terms of biological role, involved in transcription antitermination. Required for transcription of ribosomal RNA (rRNA) genes. Binds specifically to the boxA antiterminator sequence of the ribosomal RNA (rrn) operons. The polypeptide is Transcription antitermination protein NusB (Chlamydia muridarum (strain MoPn / Nigg)).